The following is a 2564-amino-acid chain: Histone-lysine N-methyltransferase SETD2 (2564 aa).

Over residues 1-11 (MKQLQPQPPPK) the composition is skewed to pro residues. The tract at residues 1–30 (MKQLQPQPPPKMGDFYDPEHPTPEEEENEA) is disordered. The span at 17-30 (DPEHPTPEEEENEA) shows a compositional bias: basic and acidic residues. Ser-131 is modified (phosphoserine). Disordered regions lie at residues 180-211 (STTV…VTEP), 272-561 (NEQA…TLSK), and 607-626 (PERE…DSPT). A compositionally biased stretch (pro residues) spans 187–197 (PSSPPPPPPPA). Over residues 198–207 (QATTLSSPAP) the composition is skewed to low complexity. Over residues 278-290 (SSKKEDSHIGKDE) the composition is skewed to basic and acidic residues. Phosphoserine is present on residues Ser-321, Ser-323, and Ser-344. Basic and acidic residues-rich tracts occupy residues 335–400 (RSHD…ERER), 421–432 (RSERSHYYDSDR), 439–467 (PYRE…EYKK), and 479–528 (SYRD…EAIK). Residue Lys-359 forms a Glycyl lysine isopeptide (Lys-Gly) (interchain with G-Cter in SUMO2) linkage. Residue Ser-422 is modified to Phosphoserine. Phosphoserine occurs at positions 532, 614, and 624. Residues 616-625 (APSNRLNDSP) are compositionally biased toward polar residues. Residue Thr-626 is modified to Phosphothreonine. Residue Lys-637 forms a Glycyl lysine isopeptide (Lys-Gly) (interchain with G-Cter in SUMO2) linkage. Ser-698, Ser-708, Ser-744, and Ser-754 each carry phosphoserine. Lys-776 participates in a covalent cross-link: Glycyl lysine isopeptide (Lys-Gly) (interchain with G-Cter in SUMO2). Disordered regions lie at residues 964–995 (EEGN…TSDD), 1036–1101 (EDYS…SDHW), 1133–1233 (LHKG…LGKT), 1264–1352 (QEKP…FSDQ), and 1393–1443 (LEKN…PGSA). Positions 971 to 994 (PERRGRPEISLDERGEGGHVHTSD) are enriched in basic and acidic residues. Residues 1045–1058 (SNDESDSEDTDSDD) are compositionally biased toward acidic residues. A compositionally biased stretch (low complexity) spans 1084–1095 (SPCSSRSSQSYR). Ser-1098 is subject to Phosphoserine. Over residues 1162 to 1171 (HPQSDGVDST) the composition is skewed to polar residues. The span at 1172-1191 (SHTDVKSDPLGHPNSEETVK) shows a compositional bias: basic and acidic residues. Positions 1215-1225 (KSWQQTTFQNR) are enriched in polar residues. Position 1228 is a phosphoserine (Ser-1228). The span at 1265–1276 (EKPSTTYQQPDS) shows a compositional bias: polar residues. Residues 1393–1403 (LEKNDIKDRGP) show a composition bias toward basic and acidic residues. Residues Ser-1413, Ser-1415, and Ser-1417 each carry the phosphoserine modification. Residues 1418-1714 (DGELQDRKKV…KKERSRKKDS (297 aa)) form an interaction with TUBA1A region. The segment covering 1421 to 1431 (LQDRKKVRVEV) has biased composition (basic and acidic residues). In terms of domain architecture, AWS spans 1494-1548 (IKRMQCECTPLSKDERAQGEIACGEDCLNRLLMIECSSRCPNGDYCSNRRFQRKQ). Zn(2+) contacts are provided by Cys-1499, Cys-1501, Cys-1516, Cys-1520, Cys-1529, Cys-1533, and Cys-1539. An SET domain is found at 1550–1667 (ADVEVILTEK…SGSELTFDYQ (118 aa)). S-adenosyl-L-methionine contacts are provided by residues 1560 to 1562 (KGW), 1603 to 1605 (HYY), and 1628 to 1629 (NH). Residue Cys-1631 coordinates Zn(2+). A Post-SET domain is found at 1674-1690 (EAQKCFCGSANCRGYLG). Gln-1676 serves as a coordination point for S-adenosyl-L-methionine. Cys-1678 serves as a coordination point for Zn(2+). Phe-1679 serves as a coordination point for S-adenosyl-L-methionine. Cys-1680 and Cys-1685 together coordinate Zn(2+). Phosphoserine occurs at positions 1696, 1844, and 1845. Positions 1831–1872 (KTAVPPLSEGDGYSSENTSRAHTPLNTPDPSTKLSTEADTDT) are disordered. Residues 1844-1867 (SSENTSRAHTPLNTPDPSTKLSTE) show a composition bias toward polar residues. Residues Thr-1853 and Thr-1872 each carry the phosphothreonine modification. Ser-1888 is subject to Phosphoserine. Residues 1921 to 2142 (EELQSQQLLP…EAQKQQQQMQ (222 aa)) are disordered. Over residues 1924 to 1935 (QSQQLLPQQLPE) the composition is skewed to low complexity. The residue at position 1952 (Ser-1952) is a Phosphoserine. The segment covering 1960 to 1972 (IEPKESNGTKLEE) has biased composition (basic and acidic residues). Acidic residues predominate over residues 1973 to 1990 (PINEETPSQDEEEGVSDV). A phosphoserine mark is found at Ser-1980, Ser-1988, and Ser-1995. Basic and acidic residues-rich tracts occupy residues 1991–2004 (ESER…KTVD), 2014–2046 (DSWK…DAVG), and 2059–2072 (RSRE…TQNK). Phosphoserine is present on residues Ser-2080 and Ser-2082. Composition is skewed to basic and acidic residues over residues 2090-2100 (RGTKRPDDRYD) and 2111-2135 (KDRN…REAQ). Residues 2117–2146 (STEERRKLFEQEVAQREAQKQQQQMQNLGM) are a coiled coil. The interval 2137–2366 (QQQQMQNLGM…APGQPQPLQP (230 aa)) is low charge region. A WW domain is found at 2389-2422 (IVLPPNWKTARDPEGKIYYYHVITRQTQWDPPTW). The disordered stretch occupies residues 2439 to 2465 (LGTPTYDENPMKASKKPKTAEADTSSE). The tract at residues 2457–2564 (TAEADTSSEL…YKPKEDTELE (108 aa)) is interaction with POLR2A.

It belongs to the class V-like SAM-binding methyltransferase superfamily. Histone-lysine methyltransferase family. SET2 subfamily. As to quaternary structure, specifically interacts with hyperphosphorylated C-terminal domain (CTD) of RNA polymerase II large subunit (POLR2A): binds to CTD heptad repeats doubly phosphorylated on 'Ser-2' and 'Ser-5' of each heptad. Interacts with HTT. Interacts with IWS1. Interacts with p53/TP53; leading to regulate p53/TP53 target genes. Component of a complex with HNRNPL. Interacts with TUBA1A; the interaction is independent on alpha-tubulin acetylation on 'Lys-40'. Interacts with STAT1. May be automethylated. In terms of tissue distribution, ubiquitously expressed.

Its subcellular location is the nucleus. It is found in the chromosome. The enzyme catalyses L-lysyl(36)-[histone H3] + 3 S-adenosyl-L-methionine = N(6),N(6),N(6)-trimethyl-L-lysyl(36)-[histone H3] + 3 S-adenosyl-L-homocysteine + 3 H(+). It carries out the reaction L-lysyl-[protein] + S-adenosyl-L-methionine = N(6)-methyl-L-lysyl-[protein] + S-adenosyl-L-homocysteine + H(+). The catalysed reaction is L-lysyl-[protein] + 3 S-adenosyl-L-methionine = N(6),N(6),N(6)-trimethyl-L-lysyl-[protein] + 3 S-adenosyl-L-homocysteine + 3 H(+). Its activity is regulated as follows. Specifically inhibited by sinefungin derivatives. N-propyl sinefungin (Pr-SNF) interacts preferentially with SETD2. Its function is as follows. Histone methyltransferase that specifically trimethylates 'Lys-36' of histone H3 (H3K36me3) using dimethylated 'Lys-36' (H3K36me2) as substrate. It is capable of trimethylating unmethylated H3K36 (H3K36me0) in vitro. Represents the main enzyme generating H3K36me3, a specific tag for epigenetic transcriptional activation. Plays a role in chromatin structure modulation during elongation by coordinating recruitment of the FACT complex and by interacting with hyperphosphorylated POLR2A. Acts as a key regulator of DNA mismatch repair in G1 and early S phase by generating H3K36me3, a mark required to recruit MSH6 subunit of the MutS alpha complex: early recruitment of the MutS alpha complex to chromatin to be replicated allows a quick identification of mismatch DNA to initiate the mismatch repair reaction. Required for DNA double-strand break repair in response to DNA damage: acts by mediating formation of H3K36me3, promoting recruitment of RAD51 and DNA repair via homologous recombination (HR). Acts as a tumor suppressor. H3K36me3 also plays an essential role in the maintenance of a heterochromatic state, by recruiting DNA methyltransferase DNMT3A. H3K36me3 is also enhanced in intron-containing genes, suggesting that SETD2 recruitment is enhanced by splicing and that splicing is coupled to recruitment of elongating RNA polymerase. Required during angiogenesis. Required for endoderm development by promoting embryonic stem cell differentiation toward endoderm: acts by mediating formation of H3K36me3 in distal promoter regions of FGFR3, leading to regulate transcription initiation of FGFR3. In addition to histones, also mediates methylation of other proteins, such as tubulins and STAT1. Trimethylates 'Lys-40' of alpha-tubulins such as TUBA1B (alpha-TubK40me3); alpha-TubK40me3 is required for normal mitosis and cytokinesis and may be a specific tag in cytoskeletal remodeling. Involved in interferon-alpha-induced antiviral defense by mediating both monomethylation of STAT1 at 'Lys-525' and catalyzing H3K36me3 on promoters of some interferon-stimulated genes (ISGs) to activate gene transcription. (Microbial infection) Recruited to the promoters of adenovirus 12 E1A gene in case of infection, possibly leading to regulate its expression. The chain is Histone-lysine N-methyltransferase SETD2 (SETD2) from Homo sapiens (Human).